A 222-amino-acid polypeptide reads, in one-letter code: Protein THYLAKOID ASSEMBLY 8, chloroplastic (222 aa).

A chloroplast-targeting transit peptide spans 1-32; it reads MALSLSQTRPPSLSHSHTLSVIVPKRTFVSIR. PPR repeat units follow at residues 115–149 and 150–184; these read DLVL…DQRS and DDKA…GWGS.

It belongs to the PPR family. P subfamily.

It localises to the plastid. The protein localises to the chloroplast thylakoid membrane. Its function is as follows. Essential protein required during embryogenesis. Mediates group II organellar RNA introns splicing (e.g. ycf3-2 and trnA). Binds weakly to specific RNA. Promotes the biogenesis of chloroplast thylakoid membranes. The polypeptide is Protein THYLAKOID ASSEMBLY 8, chloroplastic (Arabidopsis thaliana (Mouse-ear cress)).